A 414-amino-acid polypeptide reads, in one-letter code: Serine hydroxymethyltransferase (414 aa).

(6S)-5,6,7,8-tetrahydrofolate is bound by residues leucine 116 and 120 to 122 (GHL). At lysine 224 the chain carries N6-(pyridoxal phosphate)lysine. (6S)-5,6,7,8-tetrahydrofolate contacts are provided by residues glutamate 240 and 348–350 (SPF).

This sequence belongs to the SHMT family. As to quaternary structure, homodimer. It depends on pyridoxal 5'-phosphate as a cofactor.

It localises to the cytoplasm. The enzyme catalyses (6R)-5,10-methylene-5,6,7,8-tetrahydrofolate + glycine + H2O = (6S)-5,6,7,8-tetrahydrofolate + L-serine. Its pathway is one-carbon metabolism; tetrahydrofolate interconversion. It functions in the pathway amino-acid biosynthesis; glycine biosynthesis; glycine from L-serine: step 1/1. Catalyzes the reversible interconversion of serine and glycine with tetrahydrofolate (THF) serving as the one-carbon carrier. This reaction serves as the major source of one-carbon groups required for the biosynthesis of purines, thymidylate, methionine, and other important biomolecules. Also exhibits THF-independent aldolase activity toward beta-hydroxyamino acids, producing glycine and aldehydes, via a retro-aldol mechanism. This is Serine hydroxymethyltransferase from Campylobacter concisus (strain 13826).